The primary structure comprises 67 residues: Large ribosomal subunit protein bL31 (67 aa).

This sequence belongs to the bacterial ribosomal protein bL31 family. Type A subfamily. In terms of assembly, part of the 50S ribosomal subunit.

Functionally, binds the 23S rRNA. This Leptospira borgpetersenii serovar Hardjo-bovis (strain JB197) protein is Large ribosomal subunit protein bL31.